The following is a 359-amino-acid chain: Protein HEXIM1 (359 aa).

Residues 1–163 form a disordered region; the sequence is MAEPFLSEYQ…RRRPSKKKRH (163 aa). Over residues 9-19 the composition is skewed to polar residues; it reads YQHQPQTSNCT. Basic and acidic residues-rich tracts occupy residues 34-47 and 84-93; these read PGAE…DSRW and CLREGEKGQN. Ser97 and Ser98 each carry phosphoserine. Residues 148-163 are compositionally biased toward basic residues; sequence LGKKKHRRRPSKKKRH. The tract at residues 150-177 is basic region; mediates nuclear localization and interaction with 7SK snRNA and NR3C1; the sequence is KKKHRRRPSKKKRHWKPYYKLTWEEKKK. Residues 202–205 are interaction with P-TEFb; sequence PYNT. The segment at 210–250 is autoinhibitory acidic region; in absence of 7SK snRNA interacts with the basic region preventing interaction with P-TEFb and modulating subcellular localization; the sequence is MDDHDQEEPDLKTGLYSKRAAAKSDDTSDDDFMEEGGEEDG. The interval 213–262 is disordered; the sequence is HDQEEPDLKTGLYSKRAAAKSDDTSDDDFMEEGGEEDGGSDGMGGDGSEF. Ser233 carries the phosphoserine modification. Residue Thr236 is modified to Phosphothreonine. The segment covering 236 to 251 has biased composition (acidic residues); it reads TSDDDFMEEGGEEDGG. A phosphoserine mark is found at Ser237, Ser252, and Ser260. Positions 283 to 349 form a coiled coil; the sequence is SKQELIKEYL…LTENELHRQQ (67 aa). Positions 286-314 are mediates interaction with CCNT1; the sequence is ELIKEYLELEKCLSRMEDENNRLRLESKR. The segment at 310–355 is required for inhibition of ESR1-dependent transcription; it reads LESKRLGGDDARVRELELELDRLRAENLQLLTENELHRQQERAPLS.

The protein belongs to the HEXIM family. Homooligomer and heterooligomer with HEXIM2; probably dimeric. Core component of the 7SK RNP complex, at least composed of 7SK RNA, LARP7, MEPCE, HEXIM1 (or HEXIM2) and P-TEFb (composed of CDK9 and CCNT1/cyclin-T1). Interacts with the N-CoR complex through NCOR1. Interacts with ESR1 and NR3C1. May interact with NF-kappa-B through RELA. Interacts with CCNT2; mediates formation of a tripartite complex with KPNA2. Part of the HDP-RNP complex composed of at least HEXIM1, PRKDC, XRCC5, XRCC6, paraspeckle proteins (SFPQ, NONO, PSPC1, RBM14, and MATR3) and NEAT1 non-coding RNA. Ubiquitously expressed with higher expression in placenta. HEXIM1 and HEXIM2 are differentially expressed. Expressed in endocrine tissues.

Its subcellular location is the nucleus. The protein resides in the cytoplasm. Functionally, transcriptional regulator which functions as a general RNA polymerase II transcription inhibitor. Core component of the 7SK RNP complex: in cooperation with 7SK snRNA sequesters P-TEFb in a large inactive 7SK snRNP complex preventing RNA polymerase II phosphorylation and subsequent transcriptional elongation. May also regulate NF-kappa-B, ESR1, NR3C1 and CIITA-dependent transcriptional activity. Plays a role in the regulation of DNA virus-mediated innate immune response by assembling into the HDP-RNP complex, a complex that serves as a platform for IRF3 phosphorylation and subsequent innate immune response activation through the cGAS-STING pathway. The chain is Protein HEXIM1 (HEXIM1) from Homo sapiens (Human).